The chain runs to 526 residues: Protein mono-ADP-ribosyltransferase PARP3 (526 aa).

Residues 1 to 55 (MAPKRRAPPASQPADGGKKAKGGQEEEEDAWSSALNALKTAPREKPPATIDGQCP) are disordered. One can recognise a WGR domain in the interval 61–151 (DAKVYEDYDC…DNFVAQPGKY (91 aa)). Residues 183–301 (PCALDETTQK…DIEVAQSLQA (119 aa)) enclose the PARP alpha-helical domain. The PARP catalytic domain occupies 312–526 (HPLDRDYALL…RIRYLVQLHF (215 aa)).

This sequence belongs to the ARTD/PARP family.

The protein resides in the nucleus. It localises to the chromosome. It is found in the cytoplasm. Its subcellular location is the cytoskeleton. The protein localises to the microtubule organizing center. The protein resides in the centrosome. It localises to the centriole. It catalyses the reaction L-aspartyl-[protein] + NAD(+) = 4-O-(ADP-D-ribosyl)-L-aspartyl-[protein] + nicotinamide. The enzyme catalyses L-glutamyl-[protein] + NAD(+) = 5-O-(ADP-D-ribosyl)-L-glutamyl-[protein] + nicotinamide. It carries out the reaction L-lysyl-[protein] + NAD(+) = N(6)-(ADP-D-ribosyl)-L-lysyl-[protein] + nicotinamide + H(+). In terms of biological role, mono-ADP-ribosyltransferase that mediates mono-ADP-ribosylation of target proteins and plays a key role in the response to DNA damage. Mediates mono-ADP-ribosylation of glutamate, aspartate or lysine residues on target proteins. In contrast to PARP1 and PARP2, it is not able to mediate poly-ADP-ribosylation. Involved in DNA repair by mediating mono-ADP-ribosylation of a limited number of acceptor proteins involved in chromatin architecture and in DNA metabolism, such as histone H2B, XRCC5 and XRCC6. ADP-ribosylation follows DNA damage and appears as an obligatory step in a detection/signaling pathway leading to the reparation of DNA strand breaks. Involved in single-strand break repair by catalyzing mono-ADP-ribosylation of histone H2B on 'Glu-2' (H2BE2ADPr) of nucleosomes containing nicked DNA. Cooperates with the XRCC5-XRCC6 (Ku80-Ku70) heterodimer to limit end-resection thereby promoting accurate NHEJ. Associates with a number of DNA repair factors and is involved in the response to exogenous and endogenous DNA strand breaks. Together with APLF, promotes the retention of the LIG4-XRCC4 complex on chromatin and accelerate DNA ligation during non-homologous end-joining (NHEJ). In addition to proteins, also able to ADP-ribosylate DNA: mediates DNA mono-ADP-ribosylation of DNA strand break termini via covalent addition of a single ADP-ribose moiety to a 5'- or 3'-terminal phosphate residues in DNA containing multiple strand breaks. The polypeptide is Protein mono-ADP-ribosyltransferase PARP3 (Gallus gallus (Chicken)).